The primary structure comprises 99 residues: Small ribosomal subunit protein bS20 (99 aa).

The protein belongs to the bacterial ribosomal protein bS20 family.

In terms of biological role, binds directly to 16S ribosomal RNA. In Thermotoga neapolitana (strain ATCC 49049 / DSM 4359 / NBRC 107923 / NS-E), this protein is Small ribosomal subunit protein bS20.